The chain runs to 402 residues: NADH-quinone oxidoreductase subunit D (402 aa).

This sequence belongs to the complex I 49 kDa subunit family. NDH-1 is composed of 14 different subunits. Subunits NuoB, C, D, E, F, and G constitute the peripheral sector of the complex.

It is found in the cell inner membrane. It carries out the reaction a quinone + NADH + 5 H(+)(in) = a quinol + NAD(+) + 4 H(+)(out). Functionally, NDH-1 shuttles electrons from NADH, via FMN and iron-sulfur (Fe-S) centers, to quinones in the respiratory chain. The immediate electron acceptor for the enzyme in this species is believed to be ubiquinone. Couples the redox reaction to proton translocation (for every two electrons transferred, four hydrogen ions are translocated across the cytoplasmic membrane), and thus conserves the redox energy in a proton gradient. This Cereibacter sphaeroides (strain ATCC 17025 / ATH 2.4.3) (Rhodobacter sphaeroides) protein is NADH-quinone oxidoreductase subunit D.